Consider the following 498-residue polypeptide: Pyruvate kinase (498 aa).

Arginine 53 contributes to the substrate binding site. Residues asparagine 55, serine 57, aspartate 87, and threonine 88 each coordinate K(+). ATP is bound at residue 55-58 (NFSH). 2 residues coordinate ATP: arginine 94 and lysine 178. Position 240 (glutamate 240) interacts with Mg(2+). Residues glycine 263, aspartate 264, and threonine 296 each contribute to the substrate site. Residue aspartate 264 coordinates Mg(2+).

It belongs to the pyruvate kinase family. As to quaternary structure, homotetramer. It depends on Mg(2+) as a cofactor. K(+) is required as a cofactor.

The enzyme catalyses pyruvate + ATP = phosphoenolpyruvate + ADP + H(+). Its pathway is carbohydrate degradation; glycolysis; pyruvate from D-glyceraldehyde 3-phosphate: step 5/5. The protein is Pyruvate kinase (PYK) of Trypanoplasma borreli.